Here is a 133-residue protein sequence, read N- to C-terminus: Salivary cystatin-L2 (133 aa).

The signal sequence occupies residues 1 to 18 (MTSSLALVLLLGGAAVCA). Residues 34–118 (DDPKYLELAH…RTCTAVIYEN (85 aa)) form the Cystatin domain.

Belongs to the cystatin family. As to expression, salivary gland, midgut and other tissues.

It localises to the secreted. Functionally, inhibitor of cysteine proteinases. Inhibits host cathepsin L (CTSL) and S (CTSS). Modulates production of various cytokines and chemokines in lipopolysaccharide (LPS)-stimulated mouse dendritic cell. Suppresses maturation of mouse bone-marrow-derived dendritic cells (BMDCs). In terms of biological role, (Microbial infection) Modulates Borrelia miyamotoi-stimulated immune responses in mice by suppressing activities of host dendritic and T-cells. The protein is Salivary cystatin-L2 of Ixodes persulcatus (Taiga tick).